The chain runs to 1491 residues: Copper-transporting ATPase 1 (1491 aa).

The Cytoplasmic portion of the chain corresponds to 1–644 (MEPSVDANSI…KREIKQWRGS (644 aa)). HMA domains lie at 8-74 (NSIT…FDAL) and 85-151 (TNTV…LDMG). Positions 18, 19, and 22 each coordinate Cu(+). Phosphothreonine is present on T152. The region spanning 171-237 (VMLKMKVEGM…QIEAVGFPAF (67 aa)) is the HMA 3 domain. 2 residues coordinate Cu(+): C182 and C185. The residue at position 270 (S270) is a Phosphoserine. Residues 277–343 (STTMFTIEGM…AIEAISPGQY (67 aa)) enclose the HMA 4 domain. Positions 288 and 291 each coordinate Cu(+). Phosphothreonine is present on T327. Phosphoserine occurs at positions 339, 353, 357, and 362. HMA domains lie at 377–443 (QEAV…FDAA), 479–545 (NKCY…FGAM), and 555–621 (GILE…FEAS). Positions 388, 391, 490, 493, 566, and 569 each coordinate Cu(+). A helical transmembrane segment spans residues 645-666 (FLVSLFFCIPVMGLMVYMMVMD). Residues 667–705 (HHLATLHHNQNMSNEEMINMHSAMFLERQILPGLSIMNL) lie on the Extracellular side of the membrane. N677 carries N-linked (GlcNAc...) asparagine glycosylation. A helical membrane pass occupies residues 706–725 (LSLLLCLPVQFCGGWYFYIQ). At 726–732 (AYKALKH) the chain is on the cytoplasmic side. The chain crosses the membrane as a helical span at residues 733–753 (KTANMDVLIVLATTIAFAYSL). At 754–772 (VILLVAMFERAKVNPITFF) the chain is on the extracellular side. A helical membrane pass occupies residues 773–793 (DTPPMLFVFIALGRWLEHIAK). Over 794 to 926 (GKTSEALAKL…SKAPIQQFAD (133 aa)) the chain is Cytoplasmic. A helical transmembrane segment spans residues 927–950 (KLSGYFVPFIVLVSIVTLLVWIII). The Extracellular portion of the chain corresponds to 951 to 980 (GFQNFEIVETYFPGYNRSISRTETIIRFAF). N-linked (GlcNAc...) asparagine glycosylation occurs at N966. A helical membrane pass occupies residues 981-1002 (QASITVLCIACPCSLGLATPTA). Residues 1003 to 1347 (VMVGTGVGAQ…LSRKTVKRIR (345 aa)) are Cytoplasmic-facing. The 4-aspartylphosphate intermediate role is filled by D1035. E1072 contacts ATP. T1203 carries the phosphothreonine modification. The Mg(2+) site is built by D1292 and D1296. The helical transmembrane segment at 1348–1365 (INFVFALIYNLVGIPIAA) threads the bilayer. Residues 1366–1376 (GVFLPIGLVLQ) lie on the Extracellular side of the membrane. Residues 1377–1396 (PWMGSAAMAASSVSVVLSSL) form a helical membrane-spanning segment. Topologically, residues 1397–1491 (FLKLYRKPTY…DFREDDDTTL (95 aa)) are cytoplasmic. Phosphoserine is present on residues S1421, S1423, S1451, S1454, and S1457. The short motif at 1458–1459 (LL) is the Endocytosis signal element. Phosphoserine occurs at positions 1460, 1464, 1467, and 1477. Residues 1477–1491 (SLLVGDFREDDDTTL) form a PDZD11-binding region. The Endocytosis signal motif lies at 1478–1479 (LL).

It belongs to the cation transport ATPase (P-type) (TC 3.A.3) family. Type IB subfamily. As to quaternary structure, monomer. Interacts with PDZD11. Interacts with ATOX1 and COMMD1. Interacts with TYRP1. Directly interacts with SOD3; this interaction is copper-dependent and is required for SOD3 activity. As to expression, widely expressed. Highly expressed in pituitary endocrine cells. Expressed in melanocytes (at protein level). Expressed in motor neuron (at protein level). Expressed in hippocampal neuron (at protein level). In the kidney, it is detected in the proximal and distal tubules (at protein level). Expressed in aorta (at protein level).

The protein localises to the golgi apparatus. It is found in the trans-Golgi network membrane. Its subcellular location is the cell membrane. The protein resides in the melanosome membrane. It localises to the early endosome membrane. The protein localises to the cell projection. It is found in the axon. Its subcellular location is the dendrite. The protein resides in the postsynaptic density. It carries out the reaction Cu(+)(in) + ATP + H2O = Cu(+)(out) + ADP + phosphate + H(+). In terms of biological role, ATP-driven copper (Cu(+)) ion pump that plays an important role in intracellular copper ion homeostasis. Within a catalytic cycle, acquires Cu(+) ion from donor protein on the cytoplasmic side of the membrane and delivers it to acceptor protein on the lumenal side. The transfer of Cu(+) ion across the membrane is coupled to ATP hydrolysis and is associated with a transient phosphorylation that shifts the pump conformation from inward-facing to outward-facing state. Under physiological conditions, at low cytosolic copper concentration, it is localized at the trans-Golgi network (TGN) where it transfers Cu(+) ions to cuproenzymes of the secretory pathway. Upon elevated cytosolic copper concentrations, it relocalizes to the plasma membrane where it is responsible for the export of excess Cu(+) ions. May play a dual role in neuron function and survival by regulating cooper efflux and neuronal transmission at the synapse as well as by supplying Cu(+) ions to enzymes such as PAM, TYR and SOD3. In the melanosomes of pigmented cells, provides copper cofactor to TYR to form an active TYR holoenzyme for melanin biosynthesis. The sequence is that of Copper-transporting ATPase 1 from Mus musculus (Mouse).